The sequence spans 144 residues: Mercuric transport protein MerC (144 aa).

Over 1-21 (MSAITRIIDKIGIVGTIVGSF) the chain is Cytoplasmic. A helical transmembrane segment spans residues 22 to 42 (SCAMCFPAAASLGAAIGLGFL). Positions 23 and 26 each coordinate Hg(2+). Over 43 to 46 (SQWE) the chain is Periplasmic. The chain crosses the membrane as a helical span at residues 47-67 (GLFVQWLIPIFASVALLATLA). The Cytoplasmic segment spans residues 68–78 (GWFSHRQWQRT). Residues 79–99 (LLGSIGPVLALVGVFGLTHHF) traverse the membrane as a helical segment. Topologically, residues 100–103 (LDKD) are periplasmic. The helical transmembrane segment at 104-124 (LARVIFYTGLVVMFLVSIWDM) threads the bilayer. Over 125–144 (VNPANRRCATDGCETPAPRS) the chain is Cytoplasmic.

In terms of assembly, monomer.

It localises to the cell inner membrane. Inhibited by the thiol-modifying reagent N-ethylmaleimide (NEM). In terms of biological role, involved in mercuric ion uptake. This is Mercuric transport protein MerC from Acidithiobacillus ferrooxidans (Thiobacillus ferrooxidans).